We begin with the raw amino-acid sequence, 79 residues long: MKILAFFIFVLLIFSCSSSMIMGVHYHEYRCHDWVDCAIWCKQWVPQPKCINRVCDCKPKSLPTNEEVPQSAYSSNSNY.

Residues 1-19 (MKILAFFIFVLLIFSCSSS) form the signal peptide. Disulfide bonds link cysteine 31/cysteine 50, cysteine 37/cysteine 55, and cysteine 41/cysteine 57.

Belongs to the DEFL family.

Its subcellular location is the secreted. The sequence is that of Putative defensin-like protein 309 from Arabidopsis thaliana (Mouse-ear cress).